The chain runs to 282 residues: uncharacterized protein (282 aa).

2 disordered regions span residues 1–45 and 201–259; these read MPLE…EEDE and DRRR…KPWG. Residues 10–19 are compositionally biased toward basic and acidic residues; that stretch reads SEMKEFKEST. Residues 26–38 show a composition bias toward polar residues; the sequence is SVSSEETLTQSMV. Positions 201–237 are enriched in basic and acidic residues; it reads DRRRKEDSKARSRLTRREEHSEHHRSGKSRRERERRS.

This is an uncharacterized protein from Ostreid herpesvirus 1 (isolate France) (OsHV-1).